A 357-amino-acid polypeptide reads, in one-letter code: Sulfate/thiosulfate import ATP-binding protein CysA (357 aa).

The region spanning 3–237 is the ABC transporter domain; the sequence is IVIQNVSKSF…PKSPFVYDFL (235 aa). 35–42 is a binding site for ATP; the sequence is GPSGSGKT.

This sequence belongs to the ABC transporter superfamily. Sulfate/tungstate importer (TC 3.A.1.6) family. The complex is composed of two ATP-binding proteins (CysA), two transmembrane proteins (CysT and CysW) and a solute-binding protein (CysP).

It localises to the cell membrane. It catalyses the reaction sulfate(out) + ATP + H2O = sulfate(in) + ADP + phosphate + H(+). It carries out the reaction thiosulfate(out) + ATP + H2O = thiosulfate(in) + ADP + phosphate + H(+). In terms of biological role, part of the ABC transporter complex CysAWTP involved in sulfate/thiosulfate import. Responsible for energy coupling to the transport system. This is Sulfate/thiosulfate import ATP-binding protein CysA from Halalkalibacterium halodurans (strain ATCC BAA-125 / DSM 18197 / FERM 7344 / JCM 9153 / C-125) (Bacillus halodurans).